The chain runs to 43 residues: METATFVAIFISCLLISFTGYALYTAFGQPSNELRDPFEEHED.

A helical membrane pass occupies residues 4 to 24; the sequence is ATFVAIFISCLLISFTGYALY.

This sequence belongs to the PsbN family.

The protein localises to the plastid. It is found in the chloroplast thylakoid membrane. May play a role in photosystem I and II biogenesis. This chain is Protein PsbN, found in Marchantia polymorpha (Common liverwort).